A 366-amino-acid chain; its full sequence is Zinc transporter ZIP13 (366 aa).

Residues 1 to 5 (MTKQK) lie on the Lumenal side of the membrane. Residues 6–26 (LLLNGTFSLILIVACEAQQLP) traverse the membrane as a helical segment. The Cytoplasmic portion of the chain corresponds to 27 to 57 (RSHAASSSGPLCEKEAESWGNLLSSERLDAW). A helical membrane pass occupies residues 58–78 (ICSLIGSFMVGLSGIFPLLVI). The Lumenal portion of the chain corresponds to 79-97 (PFETGAALRSEAGSRRLKQ). The helical transmembrane segment at 98-118 (LLSFAIGGLLGNVFLHLLPEA) threads the bilayer. The Cytoplasmic portion of the chain corresponds to 119–137 (WAYTCSAAAGEGQSFQQQK). Residues 138 to 158 (LLGLWVIIGFLTFLALEKIFL) traverse the membrane as a helical segment. Residues 159-225 (EKEEEECPGV…NRIKISGYLN (67 aa)) lie on the Lumenal side of the membrane. Positions 183–205 (SGYPPSKVAGKSQRAEKNSTQCN) are disordered. Residues 226–246 (LLANTIDNFTHGLAVAASFLV) form a helical membrane-spanning segment. At 247 to 282 (SRKVGFLTTMAILLHEIPHEVGDFAILLRAGFDRWS) the chain is on the cytoplasmic side. Positions 261–266 (HEIPHE) match the XEXPHE-motif motif. The helical transmembrane segment at 283 to 303 (AAKMQLSTALGGIVGACFAIC) threads the bilayer. The Lumenal segment spans residues 304 to 313 (AQSPKGAGET). The chain crosses the membrane as a helical span at residues 314 to 334 (VAWILPFTSGGFLYIALVNVV). Over 335–343 (PDLLEEKNP) the chain is Cytoplasmic. The chain crosses the membrane as a helical span at residues 344 to 364 (WNSLQQILLLCTGITVMVLLA). Over 365 to 366 (HN) the chain is Lumenal.

The protein belongs to the ZIP transporter (TC 2.A.5) family. In terms of assembly, homodimer.

The protein localises to the golgi apparatus membrane. Its subcellular location is the cytoplasmic vesicle membrane. The protein resides in the endoplasmic reticulum membrane. It catalyses the reaction Zn(2+)(in) = Zn(2+)(out). Its function is as follows. Functions as a zinc transporter transporting Zn(2+) from the Golgi apparatus to the cytosol and thus influences the zinc level at least in areas of the cytosol. This is Zinc transporter ZIP13 from Gallus gallus (Chicken).